We begin with the raw amino-acid sequence, 245 residues long: MSQPKTPLRRNGFTFKQFFVAHDRCAMKVGTDGILLGAWAPVAKAQRVLDIGAGSGLLTLMLAQRTEDTVTLDAVELDAQAAEQARENIDASPWAARIQVHSADIQTWTQQQTQRYELIVSNPPYYDKGVACATPAREQARYTTTLDHGTLLACAAQLITEEGFFCVVLPESSGEAFSRLAGEQGWHLRLRTDVAENAGKLPHRVLLAFSPSPGECFCDDLLIRGPDQHYSPAYCALTEAFYLFM.

Belongs to the methyltransferase superfamily. tRNA (adenine-N(6)-)-methyltransferase family.

It is found in the cytoplasm. It catalyses the reaction adenosine(37) in tRNA1(Val) + S-adenosyl-L-methionine = N(6)-methyladenosine(37) in tRNA1(Val) + S-adenosyl-L-homocysteine + H(+). Specifically methylates the adenine in position 37 of tRNA(1)(Val) (anticodon cmo5UAC). This Cronobacter sakazakii (strain ATCC BAA-894) (Enterobacter sakazakii) protein is tRNA1(Val) (adenine(37)-N6)-methyltransferase.